The sequence spans 571 residues: Glycine--tRNA ligase (571 aa).

Substrate is bound by residues R99 and E165. Residues 197-199, 207-212, 324-325, and 443-446 contribute to the ATP site; these read RNE, IRLREF, EC, and GIDR. 212-216 contributes to the substrate binding site; that stretch reads FTQAE. A substrate-binding site is contributed by 439–443; it reads EPSFG.

The protein belongs to the class-II aminoacyl-tRNA synthetase family.

The protein resides in the cytoplasm. It carries out the reaction tRNA(Gly) + glycine + ATP = glycyl-tRNA(Gly) + AMP + diphosphate. In terms of biological role, catalyzes the attachment of glycine to tRNA(Gly). This is Glycine--tRNA ligase from Pyrococcus abyssi (strain GE5 / Orsay).